The chain runs to 571 residues: Urease subunit alpha (571 aa).

One can recognise a Urease domain in the interval glycine 133–phenylalanine 571. The Ni(2+) site is built by histidine 138, histidine 140, and lysine 221. At lysine 221 the chain carries N6-carboxylysine. Substrate is bound at residue histidine 223. 2 residues coordinate Ni(2+): histidine 250 and histidine 276. Histidine 324 (proton donor) is an active-site residue. Aspartate 364 serves as a coordination point for Ni(2+).

It belongs to the metallo-dependent hydrolases superfamily. Urease alpha subunit family. In terms of assembly, heterotrimer of UreA (gamma), UreB (beta) and UreC (alpha) subunits. Three heterotrimers associate to form the active enzyme. Ni cation is required as a cofactor. Post-translationally, carboxylation allows a single lysine to coordinate two nickel ions.

It is found in the cytoplasm. It catalyses the reaction urea + 2 H2O + H(+) = hydrogencarbonate + 2 NH4(+). Its pathway is nitrogen metabolism; urea degradation; CO(2) and NH(3) from urea (urease route): step 1/1. The chain is Urease subunit alpha from Staphylococcus saprophyticus subsp. saprophyticus (strain ATCC 15305 / DSM 20229 / NCIMB 8711 / NCTC 7292 / S-41).